Reading from the N-terminus, the 248-residue chain is Trypsin I-P38 (248 aa).

Residues 1–15 (MKFLVLVAFLGVAVA) form the signal peptide. Residues 16-25 (FPISDEDDDK) constitute a propeptide, activation peptide. Residues 26-246 (IVGGYSCARS…YVSWIKTTMS (221 aa)) enclose the Peptidase S1 domain. 6 disulfide bridges follow: Cys-32–Cys-162, Cys-50–Cys-66, Cys-134–Cys-235, Cys-141–Cys-208, Cys-173–Cys-187, and Cys-198–Cys-222. The active-site Charge relay system is the His-65. Residues Glu-77, Asn-79, and Glu-87 each contribute to the Ca(2+) site. Asp-109 acts as the Charge relay system in catalysis. Ser-202 functions as the Charge relay system in the catalytic mechanism.

Belongs to the peptidase S1 family. Ca(2+) is required as a cofactor. In terms of tissue distribution, high levels are seen in the pancreas while lower levels are found in the liver, spleen and thymus.

The protein localises to the secreted. The protein resides in the extracellular space. It carries out the reaction Preferential cleavage: Arg-|-Xaa, Lys-|-Xaa.. In Gallus gallus (Chicken), this protein is Trypsin I-P38.